The following is a 351-amino-acid chain: Phosphoribosylformylglycinamidine cyclo-ligase (351 aa).

Belongs to the AIR synthase family.

It localises to the cytoplasm. The enzyme catalyses 2-formamido-N(1)-(5-O-phospho-beta-D-ribosyl)acetamidine + ATP = 5-amino-1-(5-phospho-beta-D-ribosyl)imidazole + ADP + phosphate + H(+). The protein operates within purine metabolism; IMP biosynthesis via de novo pathway; 5-amino-1-(5-phospho-D-ribosyl)imidazole from N(2)-formyl-N(1)-(5-phospho-D-ribosyl)glycinamide: step 2/2. This chain is Phosphoribosylformylglycinamidine cyclo-ligase, found in Burkholderia vietnamiensis (strain G4 / LMG 22486) (Burkholderia cepacia (strain R1808)).